A 1475-amino-acid polypeptide reads, in one-letter code: Alpha-glucan water dikinase, chloroplastic (1475 aa).

The N-terminal 85 residues, 1–85 (MSNSIGRNVL…HRPVLITPRA (85 aa)), are a transit peptide targeting the chloroplast. H1077 acts as the Tele-phosphohistidine intermediate in catalysis.

It belongs to the PEP-utilizing enzyme family. As to quaternary structure, homodimer. Mg(2+) is required as a cofactor.

The protein resides in the plastid. It localises to the chloroplast. It carries out the reaction [(1-&gt;4)-alpha-D-glucosyl](n) + n ATP + n H2O = [(1-&gt;4)-6-phospho-alpha-D-glucosyl](n) + n AMP + n phosphate + 2n H(+). In terms of biological role, mediates the incorporation of phosphate into starch-like alpha-glucan, mostly at the C-6 position of glucose units. Acts as an overall regulator of starch mobilization. Required for starch degradation, suggesting that the phosphate content of starch regulates its degradability. In Citrus reticulata (Tangerine), this protein is Alpha-glucan water dikinase, chloroplastic (R1).